The sequence spans 652 residues: Putative asparagine synthetase [glutamine-hydrolyzing] (652 aa).

The active-site For GATase activity is Cys2. The Glutamine amidotransferase type-2 domain maps to 2-231; the sequence is CGLLAFVAAP…SGCFARIRAD (230 aa). L-glutamine-binding positions include 60–64, 89–91, and Asp115; these read RLSII and NGE. 382–383 contacts ATP; it reads SG.

It belongs to the asparagine synthetase family.

The catalysed reaction is L-aspartate + L-glutamine + ATP + H2O = L-asparagine + L-glutamate + AMP + diphosphate + H(+). It participates in amino-acid biosynthesis; L-asparagine biosynthesis; L-asparagine from L-aspartate (L-Gln route): step 1/1. The sequence is that of Putative asparagine synthetase [glutamine-hydrolyzing] (asnB) from Mycobacterium bovis (strain ATCC BAA-935 / AF2122/97).